We begin with the raw amino-acid sequence, 242 residues long: 3-deoxy-manno-octulosonate cytidylyltransferase (242 aa).

It belongs to the KdsB family.

It is found in the cytoplasm. The catalysed reaction is 3-deoxy-alpha-D-manno-oct-2-ulosonate + CTP = CMP-3-deoxy-beta-D-manno-octulosonate + diphosphate. The protein operates within nucleotide-sugar biosynthesis; CMP-3-deoxy-D-manno-octulosonate biosynthesis; CMP-3-deoxy-D-manno-octulosonate from 3-deoxy-D-manno-octulosonate and CTP: step 1/1. Its pathway is bacterial outer membrane biogenesis; lipopolysaccharide biosynthesis. In terms of biological role, activates KDO (a required 8-carbon sugar) for incorporation into bacterial lipopolysaccharide in Gram-negative bacteria. This chain is 3-deoxy-manno-octulosonate cytidylyltransferase, found in Anaeromyxobacter dehalogenans (strain 2CP-C).